A 441-amino-acid polypeptide reads, in one-letter code: Ribosomal protein uS12 methylthiotransferase RimO (441 aa).

The 111-residue stretch at 7 to 117 folds into the MTTase N-terminal domain; the sequence is PKISFVSLGC…VLEAVHRALP (111 aa). 6 residues coordinate [4Fe-4S] cluster: Cys-16, Cys-52, Cys-81, Cys-148, Cys-152, and Cys-155. Positions 134-371 constitute a Radical SAM core domain; sequence LTPRHYAYLK…MARQQKISAR (238 aa). One can recognise a TRAM domain in the interval 374 to 440; the sequence is KRKVGTRQQV…AYDLHGTVAG (67 aa).

Belongs to the methylthiotransferase family. RimO subfamily. Requires [4Fe-4S] cluster as cofactor.

The protein resides in the cytoplasm. It catalyses the reaction L-aspartate(89)-[ribosomal protein uS12]-hydrogen + (sulfur carrier)-SH + AH2 + 2 S-adenosyl-L-methionine = 3-methylsulfanyl-L-aspartate(89)-[ribosomal protein uS12]-hydrogen + (sulfur carrier)-H + 5'-deoxyadenosine + L-methionine + A + S-adenosyl-L-homocysteine + 2 H(+). Its function is as follows. Catalyzes the methylthiolation of an aspartic acid residue of ribosomal protein uS12. In Rhodopseudomonas palustris (strain BisA53), this protein is Ribosomal protein uS12 methylthiotransferase RimO.